Consider the following 477-residue polypeptide: UDP-N-acetylmuramate--L-alanine ligase (477 aa).

Residue 112 to 118 (GAHGKTT) coordinates ATP.

The protein belongs to the MurCDEF family.

The protein localises to the cytoplasm. It catalyses the reaction UDP-N-acetyl-alpha-D-muramate + L-alanine + ATP = UDP-N-acetyl-alpha-D-muramoyl-L-alanine + ADP + phosphate + H(+). Its pathway is cell wall biogenesis; peptidoglycan biosynthesis. Cell wall formation. The chain is UDP-N-acetylmuramate--L-alanine ligase from Delftia acidovorans (strain DSM 14801 / SPH-1).